The chain runs to 289 residues: Phosphatidylglycerol--prolipoprotein diacylglyceryl transferase (289 aa).

Transmembrane regions (helical) follow at residues 13–33, 61–81, and 99–119; these read LGPL…LLGW, FILW…VLFY, and GGMS…LFAM. Position 144 (Arg-144) interacts with a 1,2-diacyl-sn-glycero-3-phospho-(1'-sn-glycerol). 2 helical membrane passes run 218–238 and 250–270; these read GVVM…LENV and LGLT…LWLI.

This sequence belongs to the Lgt family.

The protein localises to the cell inner membrane. It catalyses the reaction L-cysteinyl-[prolipoprotein] + a 1,2-diacyl-sn-glycero-3-phospho-(1'-sn-glycerol) = an S-1,2-diacyl-sn-glyceryl-L-cysteinyl-[prolipoprotein] + sn-glycerol 1-phosphate + H(+). The protein operates within protein modification; lipoprotein biosynthesis (diacylglyceryl transfer). Its function is as follows. Catalyzes the transfer of the diacylglyceryl group from phosphatidylglycerol to the sulfhydryl group of the N-terminal cysteine of a prolipoprotein, the first step in the formation of mature lipoproteins. In Phenylobacterium zucineum (strain HLK1), this protein is Phosphatidylglycerol--prolipoprotein diacylglyceryl transferase.